The sequence spans 231 residues: Homeobox protein engrailed-1a (231 aa).

Disordered regions lie at residues 1–29 (MEDQRRGQGEEEDDSGSLPSPPLLPAHRN), 43–105 (GCKR…KDSQ), and 121–148 (DRPSSGPRTRKLKKKNNNTESDDKRPRT). The span at 43-56 (GCKRERERVTRDSG) shows a compositional bias: basic and acidic residues. A compositionally biased stretch (low complexity) spans 68–102 (DGVSSSASSTVSSPVSSRQSNKVEQGSSKSSSPSK). A DNA-binding region (homeobox) is located at residues 143–202 (DKRPRTAFTAEQLQRLKAEFQTSRYITEQRRQALARELGLNESQIKIWFQNKRAKIKKSS).

Belongs to the engrailed homeobox family.

Its subcellular location is the nucleus. The polypeptide is Homeobox protein engrailed-1a (eng1a) (Danio rerio (Zebrafish)).